The sequence spans 132 residues: Rubredoxin-1 (132 aa).

One can recognise a Rubredoxin-like domain in the interval 1–53 (MSRYQCPDCQYIYDENKGEPHEGFHPNTSWNDIPKDWACPDCAVRDKVDFIFL). Positions 6, 9, 39, and 42 each coordinate Fe cation. The disordered stretch occupies residues 108 to 132 (TEVLDQASTPQVVRKSSTRKKMRNK). Residues 113-122 (QASTPQVVRK) show a composition bias toward polar residues. A compositionally biased stretch (basic residues) spans 123-132 (SSTRKKMRNK).

Belongs to the rubredoxin family. It depends on Fe(3+) as a cofactor.

It is found in the cytoplasm. It functions in the pathway hydrocarbon metabolism; alkane degradation. In terms of biological role, not known. Probably involved in an electron transport pathway, but not required for the hydrocarbon hydroxylating system. Seems to be non-functional. The protein is Rubredoxin-1 (alkF) of Ectopseudomonas oleovorans (Pseudomonas oleovorans).